Reading from the N-terminus, the 350-residue chain is Flap endonuclease 1 (350 aa).

Residues 1–102 (MGVTELGKLI…IEIEKRRRVR (102 aa)) are N-domain. Asp31, Asp84, Glu156, Glu158, Asp177, Asp179, and Asp241 together coordinate Mg(2+). The I-domain stretch occupies residues 120 to 263 (EARKYAQRAL…RALRLIQEYG (144 aa)).

Belongs to the XPG/RAD2 endonuclease family. FEN1 subfamily. In terms of assembly, interacts with PCNA. PCNA stimulates the nuclease activity without altering cleavage specificity. Requires Mg(2+) as cofactor.

Functionally, structure-specific nuclease with 5'-flap endonuclease and 5'-3' exonuclease activities involved in DNA replication and repair. During DNA replication, cleaves the 5'-overhanging flap structure that is generated by displacement synthesis when DNA polymerase encounters the 5'-end of a downstream Okazaki fragment. Binds the unpaired 3'-DNA end and kinks the DNA to facilitate 5' cleavage specificity. Cleaves one nucleotide into the double-stranded DNA from the junction in flap DNA, leaving a nick for ligation. Also involved in the base excision repair (BER) pathway. Acts as a genome stabilization factor that prevents flaps from equilibrating into structures that lead to duplications and deletions. Also possesses 5'-3' exonuclease activity on nicked or gapped double-stranded DNA. The sequence is that of Flap endonuclease 1 from Caldivirga maquilingensis (strain ATCC 700844 / DSM 13496 / JCM 10307 / IC-167).